The following is a 1469-amino-acid chain: WASH complex subunit 2 (1469 aa).

Ser-136 bears the Phosphoserine mark. 2 disordered regions span residues 178-349 and 367-546; these read YDSK…RMPV and KVQS…RVAG. The segment covering 197–206 has biased composition (basic and acidic residues); that stretch reads SDEKEPETKK. Ser-227 is modified (phosphoserine). Composition is skewed to low complexity over residues 276 to 293 and 306 to 316; these read SPPSDDPPSTSSSPTSSP and STASLSSSSSS. The short motif at 351–372 is the LFa 1 element; the sequence is LFNEDEFKSFMSEIVDKVQSKT. The span at 370-385 shows a compositional bias: polar residues; the sequence is SKTPSSSVSPATTIST. The span at 387–399 shows a compositional bias: basic and acidic residues; that stretch reads EPPKTKKPVEEYP. A phosphoserine mark is found at Ser-422 and Ser-426. Residues 519–528 show a composition bias toward acidic residues; it reads FDDDDLDIDD. The LFa 5 signature appears at 550–563; that stretch reads LFEDDDQDDVTDLF. The disordered stretch occupies residues 571-591; it reads IPKETSSGVSPNKNVETPVAS. A compositionally biased stretch (polar residues) spans 574–585; the sequence is ETSSGVSPNKNV. Ser-580 is subject to Phosphoserine. A Phosphothreonine modification is found at Thr-587. The LFa 6 motif lies at 595–605; sequence LFDDIEDEDLF. Disordered regions lie at residues 607-760, 933-1254, and 1316-1469; these read TPKA…TDLF, ALPN…KLFS, and VTTA…LDFK. Composition is skewed to basic and acidic residues over residues 626–649 and 671–687; these read GEDKKQSEIAEQKSKNIETGEKQH and TEQKSDDKEWEAVKDDT. The residue at position 693 (Thr-693) is a Phosphothreonine. The short motif at 698–709 is the LFa 8 element; that stretch reads LFSEDLTDDELF. Composition is skewed to polar residues over residues 709-728, 735-745, and 938-956; these read FSSTSNNMAEPKSANETNEF, YTSQTEENVSP, and PSATKPSPVTPGDQPSVSS. Basic and acidic residues-rich tracts occupy residues 971–990, 1031–1042, and 1077–1089; these read DNDHAGEEVQKEAEPQKDEL, ETDRSEVKETPE, and RKQESSSSERDEP. Polar residues predominate over residues 1091–1109; sequence ATVQTEAEAPSSGQNTVSS. Positions 1118-1136 are enriched in basic residues; that stretch reads NKSRARGPAKRRPSTRRGR. The span at 1159 to 1170 shows a compositional bias: basic and acidic residues; it reads DSPEVEHSERSS. A phosphoserine mark is found at Ser-1241, Ser-1245, Ser-1254, Ser-1344, Ser-1380, Ser-1381, and Ser-1408. Composition is skewed to low complexity over residues 1417-1426 and 1434-1452; these read FGGSSTSKAA and AARTASKPPASKTTTPTAT.

It belongs to the FAM21 family. In terms of assembly, component of the WASH complex.

Acts at least in part as component of the WASH complex which may regulate wash nucleation-promoting factor (NPF) activity and is required for its membrane targeting during endosomal sorting. In Drosophila melanogaster (Fruit fly), this protein is WASH complex subunit 2.